We begin with the raw amino-acid sequence, 583 residues long: R-linalool synthase QH5, chloroplastic (583 aa).

Residues 1-40 (MASISLFPYSILKQTSPLARGTAYNRIYSTKTTGITVDVA) constitute a chloroplast transit peptide. Residues Arg298, Asp335, Asp339, Arg476, and Asp479 each contribute to the (2E)-geranyl diphosphate site. Mg(2+)-binding residues include Asp335 and Asp339. Positions 335-339 (DDVYD) match the DDXXD motif motif. Mg(2+) is bound by residues Asp479, Thr483, and Glu487. Asp492 is a binding site for K(+).

Belongs to the terpene synthase family. Tpsb subfamily. The cofactor is Mg(2+). Requires Mn(2+) as cofactor. It depends on K(+) as a cofactor. As to expression, expressed in every aerial organ except for the stem stele of mature plants. Not detected in roots.

It is found in the plastid. The protein localises to the chloroplast. The enzyme catalyses (2E)-geranyl diphosphate + H2O = (R)-linalool + diphosphate. It participates in secondary metabolite biosynthesis; terpenoid biosynthesis. Monoterpene synthase that catalyzes the formation of (3R)-linalool from geranyl diphosphate, but not from isopentenyl diphosphate, dimethylallyl diphosphate, chrysanthemyl diphosphate, farnesyl diphosphate, (+)-copalyl diphosphate or geranylgeranyl diphosphate. This chain is R-linalool synthase QH5, chloroplastic, found in Artemisia annua (Sweet wormwood).